The sequence spans 226 residues: V-type proton ATPase subunit E (226 aa).

This sequence belongs to the V-ATPase E subunit family. V-ATPase is a heteromultimeric enzyme made up of two complexes: the ATP-hydrolytic V1 complex and the proton translocation V0 complex. The V1 complex consists of three catalytic AB heterodimers that form a heterohexamer, three peripheral stalks each consisting of EG heterodimers, one central rotor including subunits D and F, and the regulatory subunits C and H. The proton translocation complex V0 consists of the proton transport subunit a, a ring of proteolipid subunits c9c'', rotary subunit d, subunits e and f, and the accessory subunits VhaAC45 and ATP6AP2.

Its function is as follows. Subunit of the V1 complex of vacuolar(H+)-ATPase (V-ATPase), a multisubunit enzyme composed of a peripheral complex (V1) that hydrolyzes ATP and a membrane integral complex (V0) that translocates protons. V-ATPase is responsible for acidifying and maintaining the pH of intracellular compartments and in some cell types, is targeted to the plasma membrane, where it is responsible for acidifying the extracellular environment. This chain is V-type proton ATPase subunit E (VHA26), found in Manduca sexta (Tobacco hawkmoth).